The following is a 387-amino-acid chain: Phosphoglycerate kinase (387 aa).

Substrate is bound by residues 21-23 (DLN), arginine 36, 59-62 (HLGR), arginine 113, and arginine 146. ATP is bound by residues lysine 197, glutamate 314, and 340–343 (GGDT).

This sequence belongs to the phosphoglycerate kinase family. Monomer.

Its subcellular location is the cytoplasm. It catalyses the reaction (2R)-3-phosphoglycerate + ATP = (2R)-3-phospho-glyceroyl phosphate + ADP. Its pathway is carbohydrate degradation; glycolysis; pyruvate from D-glyceraldehyde 3-phosphate: step 2/5. The sequence is that of Phosphoglycerate kinase from Pseudomonas putida (strain ATCC 700007 / DSM 6899 / JCM 31910 / BCRC 17059 / LMG 24140 / F1).